We begin with the raw amino-acid sequence, 337 residues long: RNA 3'-terminal phosphate cyclase (337 aa).

ATP contacts are provided by residues glutamine 101 and 282–285 (HMSD). Residue histidine 306 is the Tele-AMP-histidine intermediate of the active site.

This sequence belongs to the RNA 3'-terminal cyclase family. Type 1 subfamily.

It localises to the cytoplasm. The enzyme catalyses a 3'-end 3'-phospho-ribonucleotide-RNA + ATP = a 3'-end 2',3'-cyclophospho-ribonucleotide-RNA + AMP + diphosphate. Catalyzes the conversion of 3'-phosphate to a 2',3'-cyclic phosphodiester at the end of RNA. The mechanism of action of the enzyme occurs in 3 steps: (A) adenylation of the enzyme by ATP; (B) transfer of adenylate to an RNA-N3'P to produce RNA-N3'PP5'A; (C) and attack of the adjacent 2'-hydroxyl on the 3'-phosphorus in the diester linkage to produce the cyclic end product. The biological role of this enzyme is unknown but it is likely to function in some aspects of cellular RNA processing. The chain is RNA 3'-terminal phosphate cyclase from Saccharolobus islandicus (strain L.S.2.15 / Lassen #1) (Sulfolobus islandicus).